Reading from the N-terminus, the 659-residue chain is Putative pentatricopeptide repeat-containing protein At3g16890, mitochondrial (659 aa).

Residues 1 to 32 (MRGFASSASRIATAAAASKSLNASTSVNPKLS) constitute a mitochondrion transit peptide. PPR repeat units lie at residues 109-143 (DQSL…GYRI), 144-178 (SDEL…GMKP), 179-213 (STRL…GCKP), 214-248 (DRFT…GNRP), 249-283 (NVFT…KLNP), 284-318 (NEAT…DSNL), 319-353 (QRVG…GYIP), 354-388 (DSST…GVKP), 389-423 (GFNG…GLLS), 424-458 (SVYS…GISP), 459-493 (NLVT…GFKP), 494-528 (DVIT…GIEP), 529-563 (NEIT…GLSP), 564-598 (DLYA…GLKP), and 599-633 (DNFT…GCVP).

It belongs to the PPR family. P subfamily.

The protein resides in the mitochondrion. Functionally, required for the ubiquinol-cytochrome c oxidoreductase activity of mitochondrial complex III. The protein is Putative pentatricopeptide repeat-containing protein At3g16890, mitochondrial (PPR40) of Arabidopsis thaliana (Mouse-ear cress).